A 98-amino-acid chain; its full sequence is Integration host factor subunit beta (98 aa).

This sequence belongs to the bacterial histone-like protein family. Heterodimer of an alpha and a beta chain.

Its function is as follows. This protein is one of the two subunits of integration host factor, a specific DNA-binding protein that functions in genetic recombination as well as in transcriptional and translational control. In Marinobacter nauticus (strain ATCC 700491 / DSM 11845 / VT8) (Marinobacter aquaeolei), this protein is Integration host factor subunit beta.